Consider the following 309-residue polypeptide: Ribonuclease Z (309 aa).

Zn(2+) contacts are provided by H63, H65, D67, H68, H141, D212, and H270. Residue D67 is the Proton acceptor of the active site.

The protein belongs to the RNase Z family. Homodimer. Requires Zn(2+) as cofactor.

The enzyme catalyses Endonucleolytic cleavage of RNA, removing extra 3' nucleotides from tRNA precursor, generating 3' termini of tRNAs. A 3'-hydroxy group is left at the tRNA terminus and a 5'-phosphoryl group is left at the trailer molecule.. Its function is as follows. Zinc phosphodiesterase, which displays some tRNA 3'-processing endonuclease activity. Probably involved in tRNA maturation, by removing a 3'-trailer from precursor tRNA. This chain is Ribonuclease Z, found in Lactobacillus johnsonii (strain CNCM I-12250 / La1 / NCC 533).